Reading from the N-terminus, the 1112-residue chain is Zinc finger protein 654 (1112 aa).

Residues 482 to 514 (PSSSLKKRVDQQSVEEDQSTGETDPDDASVVQP) are disordered. Residues 494–508 (SVEEDQSTGETDPDD) are compositionally biased toward acidic residues. C2H2-type zinc fingers lie at residues 566 to 588 (FACV…LKNH), 738 to 763 (FKCP…RTVH), 779 to 801 (GKCK…LNRH), 807 to 831 (YFCL…TKSH), and 836 to 860 (AQCS…EAQH). Disordered stretches follow at residues 885 to 906 (FSNE…KYST) and 997 to 1018 (VESQ…NLTS). Polar residues-rich tracts occupy residues 886–899 (SNEN…VSTS) and 1002–1018 (HSAL…NLTS). Phosphoserine is present on residues Ser-1107 and Ser-1111.

This sequence belongs to the krueppel C2H2-type zinc-finger protein family.

It is found in the nucleus. Functionally, may be involved in transcriptional regulation. This Mus musculus (Mouse) protein is Zinc finger protein 654.